The following is a 334-amino-acid chain: Holliday junction branch migration complex subunit RuvB (334 aa).

The segment at alanine 4–tyrosine 184 is large ATPase domain (RuvB-L). ATP-binding positions include arginine 24, glycine 65, lysine 68, threonine 69, threonine 70, glutamate 131–tyrosine 133, arginine 174, tyrosine 184, and arginine 221. Threonine 69 provides a ligand contact to Mg(2+). The small ATPAse domain (RuvB-S) stretch occupies residues asparagine 185 to aspartate 255. Residues serine 258 to glutamate 334 are head domain (RuvB-H). DNA contacts are provided by arginine 294, arginine 313, and arginine 318.

The protein belongs to the RuvB family. In terms of assembly, homohexamer. Forms an RuvA(8)-RuvB(12)-Holliday junction (HJ) complex. HJ DNA is sandwiched between 2 RuvA tetramers; dsDNA enters through RuvA and exits via RuvB. An RuvB hexamer assembles on each DNA strand where it exits the tetramer. Each RuvB hexamer is contacted by two RuvA subunits (via domain III) on 2 adjacent RuvB subunits; this complex drives branch migration. In the full resolvosome a probable DNA-RuvA(4)-RuvB(12)-RuvC(2) complex forms which resolves the HJ.

Its subcellular location is the cytoplasm. It catalyses the reaction ATP + H2O = ADP + phosphate + H(+). Its function is as follows. The RuvA-RuvB-RuvC complex processes Holliday junction (HJ) DNA during genetic recombination and DNA repair, while the RuvA-RuvB complex plays an important role in the rescue of blocked DNA replication forks via replication fork reversal (RFR). RuvA specifically binds to HJ cruciform DNA, conferring on it an open structure. The RuvB hexamer acts as an ATP-dependent pump, pulling dsDNA into and through the RuvAB complex. RuvB forms 2 homohexamers on either side of HJ DNA bound by 1 or 2 RuvA tetramers; 4 subunits per hexamer contact DNA at a time. Coordinated motions by a converter formed by DNA-disengaged RuvB subunits stimulates ATP hydrolysis and nucleotide exchange. Immobilization of the converter enables RuvB to convert the ATP-contained energy into a lever motion, pulling 2 nucleotides of DNA out of the RuvA tetramer per ATP hydrolyzed, thus driving DNA branch migration. The RuvB motors rotate together with the DNA substrate, which together with the progressing nucleotide cycle form the mechanistic basis for DNA recombination by continuous HJ branch migration. Branch migration allows RuvC to scan DNA until it finds its consensus sequence, where it cleaves and resolves cruciform DNA. The protein is Holliday junction branch migration complex subunit RuvB of Shewanella baltica (strain OS223).